The chain runs to 346 residues: 2,5-dichlorohydroquinone reductive dechlorinase (346 aa).

The GST N-terminal domain occupies 43-154 (PRFELFHFVF…YLCDALSGGT (112 aa)). One can recognise a GST C-terminal domain in the interval 189 to 335 (DRRPESMQAV…AIIQWPGHPP (147 aa)).

Belongs to the GST superfamily.

It carries out the reaction 2,5-dichlorohydroquinone + 2 glutathione = chlorohydroquinone + glutathione disulfide + chloride + H(+). The enzyme catalyses chlorohydroquinone + 2 glutathione = hydroquinone + glutathione disulfide + chloride + H(+). Its pathway is xenobiotic degradation; gamma-hexachlorocyclohexane degradation. Functionally, catalyzes the degradation of 2,5-dichlorohydroquinone (2,5-DCHQ) into hydroquinone (HQ) via chlorohydroquinone (CHQ). This Sphingobium indicum (strain DSM 16412 / CCM 7286 / MTCC 6364 / B90A) protein is 2,5-dichlorohydroquinone reductive dechlorinase.